Consider the following 119-residue polypeptide: MTKSELIAALAARYPQLAARDTDYAVKTMLDAMTQALASGQRIEIRGFGSFSLSQRSPRIGRNPKSGEQVLVPGKQVPHFKAGKELRERVDLVGNDQGDDSSNGSSDPLQSVMDMHAMH.

The interval 91-119 (DLVGNDQGDDSSNGSSDPLQSVMDMHAMH) is disordered. Residues 94–107 (GNDQGDDSSNGSSD) show a composition bias toward low complexity.

This sequence belongs to the bacterial histone-like protein family. Heterodimer of an alpha and a beta chain.

In terms of biological role, this protein is one of the two subunits of integration host factor, a specific DNA-binding protein that functions in genetic recombination as well as in transcriptional and translational control. The chain is Integration host factor subunit beta from Bordetella parapertussis (strain 12822 / ATCC BAA-587 / NCTC 13253).